The chain runs to 338 residues: DNA-directed RNA polymerase subunit alpha (338 aa).

The alpha N-terminal domain (alpha-NTD) stretch occupies residues methionine 1–asparagine 225. The alpha C-terminal domain (alpha-CTD) stretch occupies residues tyrosine 242–glutamate 338. The interval phenylalanine 314–glutamate 338 is disordered.

Belongs to the RNA polymerase alpha chain family. In terms of assembly, homodimer. The RNAP catalytic core consists of 2 alpha, 1 beta, 1 beta' and 1 omega subunit. When a sigma factor is associated with the core the holoenzyme is formed, which can initiate transcription.

It catalyses the reaction RNA(n) + a ribonucleoside 5'-triphosphate = RNA(n+1) + diphosphate. In terms of biological role, DNA-dependent RNA polymerase catalyzes the transcription of DNA into RNA using the four ribonucleoside triphosphates as substrates. The polypeptide is DNA-directed RNA polymerase subunit alpha (Corynebacterium efficiens (strain DSM 44549 / YS-314 / AJ 12310 / JCM 11189 / NBRC 100395)).